We begin with the raw amino-acid sequence, 546 residues long: Chaperonin GroEL 1 (546 aa).

ATP is bound by residues 30–33 (TLGP), Lys-51, 87–91 (DGTTT), Gly-415, 479–481 (NAA), and Asp-495. The segment at 526–546 (KEDAPMPGGMPGGMGGMGMDM) is disordered. Gly residues predominate over residues 534–546 (GMPGGMGGMGMDM).

The protein belongs to the chaperonin (HSP60) family. In terms of assembly, forms a cylinder of 14 subunits composed of two heptameric rings stacked back-to-back. Interacts with the co-chaperonin GroES.

It is found in the cytoplasm. The catalysed reaction is ATP + H2O + a folded polypeptide = ADP + phosphate + an unfolded polypeptide.. Together with its co-chaperonin GroES, plays an essential role in assisting protein folding. The GroEL-GroES system forms a nano-cage that allows encapsulation of the non-native substrate proteins and provides a physical environment optimized to promote and accelerate protein folding. The protein is Chaperonin GroEL 1 of Burkholderia cenocepacia (strain HI2424).